The chain runs to 362 residues: Cytochrome P450 monooxygenase-like protein avaN (362 aa).

A helical transmembrane segment spans residues 3–23 (VILAIFIAAAGCLFSSWRIYW).

This sequence belongs to the cytochrome P450 family.

The protein localises to the membrane. It participates in secondary metabolite biosynthesis. Its function is as follows. Cytochrome P450 monooxygenase-like protein; part of the cluster that mediates the biosynthesis of a highly modified cyclo-arginine-tryptophan dipeptide (cRW). The first step of the pathway is perfornmed by the arginine-containing cyclodipeptide synthase (RCPDS) avaA that acts as the scaffold-generating enzyme and is responsible for formation of the cyclo-Arg-Trp (cRW) diketopiperazine. AvaB then acts as a multifunctional flavoenzyme that is responsible for generating the cyclo-Arg-formylkynurenine DKP, which can be deformylated by avaC. AvaB then further catalyzes an additional N-oxidation followed by cyclization and dehydration. The next step is an N-acetylation of the guanidine group catalyzed by the arginine N-acetyltransferase avaD. The roles of the additional enzymes identified within the ava cluster still have to be determined. The sequence is that of Cytochrome P450 monooxygenase-like protein avaN from Aspergillus versicolor.